The following is a 708-amino-acid chain: Vertnin (708 aa).

Disordered regions lie at residues 473-499 and 561-636; these read PWKG…FLPP and APAL…PVAE. The segment covering 568–582 has biased composition (basic and acidic residues); that stretch reads GLREAKEKQEKEAGR.

Belongs to the vertnin family.

This Ailuropoda melanoleuca (Giant panda) protein is Vertnin (VRTN).